Reading from the N-terminus, the 351-residue chain is Phosphate acyltransferase (351 aa).

This sequence belongs to the PlsX family. As to quaternary structure, homodimer. Probably interacts with PlsY.

It localises to the cytoplasm. It carries out the reaction a fatty acyl-[ACP] + phosphate = an acyl phosphate + holo-[ACP]. It participates in lipid metabolism; phospholipid metabolism. Catalyzes the reversible formation of acyl-phosphate (acyl-PO(4)) from acyl-[acyl-carrier-protein] (acyl-ACP). This enzyme utilizes acyl-ACP as fatty acyl donor, but not acyl-CoA. This chain is Phosphate acyltransferase, found in Verminephrobacter eiseniae (strain EF01-2).